A 428-amino-acid polypeptide reads, in one-letter code: 3-phosphoshikimate 1-carboxyvinyltransferase (428 aa).

3-phosphoshikimate contacts are provided by Lys21, Ser22, and Arg26. Lys21 contacts phosphoenolpyruvate. Phosphoenolpyruvate is bound by residues Gly91 and Arg119. Ser164, Gln166, Asp313, and Lys340 together coordinate 3-phosphoshikimate. Residue Gln166 participates in phosphoenolpyruvate binding. The active-site Proton acceptor is the Asp313. Residues Arg344 and Arg386 each contribute to the phosphoenolpyruvate site.

It belongs to the EPSP synthase family. In terms of assembly, monomer.

The protein resides in the cytoplasm. It catalyses the reaction 3-phosphoshikimate + phosphoenolpyruvate = 5-O-(1-carboxyvinyl)-3-phosphoshikimate + phosphate. The protein operates within metabolic intermediate biosynthesis; chorismate biosynthesis; chorismate from D-erythrose 4-phosphate and phosphoenolpyruvate: step 6/7. In terms of biological role, catalyzes the transfer of the enolpyruvyl moiety of phosphoenolpyruvate (PEP) to the 5-hydroxyl of shikimate-3-phosphate (S3P) to produce enolpyruvyl shikimate-3-phosphate and inorganic phosphate. The protein is 3-phosphoshikimate 1-carboxyvinyltransferase of Campylobacter jejuni (strain RM1221).